A 318-amino-acid chain; its full sequence is Retinol dehydrogenase 5 (318 aa).

Residues 1–21 (MWLPLLLGALLWAVLWLLRDR) traverse the membrane as a helical segment. Residues 22 to 288 (QSLPASNAFV…TRYSPGWDAK (267 aa)) lie on the Lumenal side of the membrane. Residue 32–56 (FITGCDSGFGRLLALQLDQRGFRVL) participates in NADP(+) binding. An N-linked (GlcNAc...) asparagine glycan is attached at Asn160. Ser163 contributes to the substrate binding site. The active-site Proton acceptor is the Tyr175. The chain crosses the membrane as a helical span at residues 289-309 (LLWLPASYLPASLVDAVLTWV). Residues 310–318 (LPKPAQAVY) are Cytoplasmic-facing.

The protein belongs to the short-chain dehydrogenases/reductases (SDR) family. In terms of assembly, homodimer. Widely expressed. In the eye, abundant in the retinal pigment epithelium.

The protein resides in the endoplasmic reticulum membrane. The enzyme catalyses 11-cis-retinol + NAD(+) = 11-cis-retinal + NADH + H(+). The catalysed reaction is 9-cis-retinol + NAD(+) = 9-cis-retinal + NADH + H(+). It carries out the reaction 13-cis-retinol + NAD(+) = 13-cis-retinal + NADH + H(+). It catalyses the reaction androsterone + NAD(+) = 5alpha-androstan-3,17-dione + NADH + H(+). The enzyme catalyses 5alpha-androstane-3alpha,17beta-diol + NAD(+) = 17beta-hydroxy-5alpha-androstan-3-one + NADH + H(+). It functions in the pathway cofactor metabolism; retinol metabolism. With respect to regulation, inhibited by 9-cis-, 13-cis- and all-trans-retinoic acids, with the most potent inhibitor being 13-cis-retinoic acid. Weakly inhibited by oleic acid. In terms of biological role, catalyzes the oxidation of cis-isomers of retinol, including 11-cis-, 9-cis-, and 13-cis-retinol in an NAD-dependent manner. Has no activity towards all-trans retinal. Plays a significant role in 11-cis retinol oxidation in the retinal pigment epithelium cells (RPE). Also recognizes steroids (androsterone, androstanediol) as its substrates. The sequence is that of Retinol dehydrogenase 5 from Homo sapiens (Human).